A 100-amino-acid chain; its full sequence is MAEANIRALADIIRRPIITEKATRLLENNQYTFEVDPRASKPEIKAAIEALFQVKVVGLSTQLPPRKARRVGRFAGHRAQVKRAVARLADGDSITLFPEV.

Belongs to the universal ribosomal protein uL23 family. Part of the 50S ribosomal subunit. Contacts protein L29, and trigger factor when it is bound to the ribosome.

In terms of biological role, one of the early assembly proteins it binds 23S rRNA. One of the proteins that surrounds the polypeptide exit tunnel on the outside of the ribosome. Forms the main docking site for trigger factor binding to the ribosome. This Synechococcus elongatus (strain ATCC 33912 / PCC 7942 / FACHB-805) (Anacystis nidulans R2) protein is Large ribosomal subunit protein uL23.